Consider the following 320-residue polypeptide: Malate dehydrogenase (320 aa).

NAD(+) contacts are provided by residues G10–G15 and D34. Residues R83 and R89 each contribute to the substrate site. NAD(+) is bound by residues N96 and I119–N121. Positions 121 and 152 each coordinate substrate. Catalysis depends on H176, which acts as the Proton acceptor.

The protein belongs to the LDH/MDH superfamily. MDH type 3 family.

It catalyses the reaction (S)-malate + NAD(+) = oxaloacetate + NADH + H(+). Its function is as follows. Catalyzes the reversible oxidation of malate to oxaloacetate. This Methylobacterium radiotolerans (strain ATCC 27329 / DSM 1819 / JCM 2831 / NBRC 15690 / NCIMB 10815 / 0-1) protein is Malate dehydrogenase.